The following is a 318-amino-acid chain: Ribonuclease Z (318 aa).

Zn(2+)-binding residues include H63, H65, D67, H68, H142, D210, and H268. Residue D67 is the Proton acceptor of the active site.

Belongs to the RNase Z family. In terms of assembly, homodimer. It depends on Zn(2+) as a cofactor.

The catalysed reaction is Endonucleolytic cleavage of RNA, removing extra 3' nucleotides from tRNA precursor, generating 3' termini of tRNAs. A 3'-hydroxy group is left at the tRNA terminus and a 5'-phosphoryl group is left at the trailer molecule.. In terms of biological role, zinc phosphodiesterase, which displays some tRNA 3'-processing endonuclease activity. Probably involved in tRNA maturation, by removing a 3'-trailer from precursor tRNA. In Thermobifida fusca (strain YX), this protein is Ribonuclease Z.